Reading from the N-terminus, the 405-residue chain is Argininosuccinate synthase (405 aa).

ATP is bound by residues 10–18 and Ala37; that span reads AYSGGLDTS. Positions 88 and 93 each coordinate L-citrulline. ATP is bound at residue Gly118. Thr120, Asn124, and Asp125 together coordinate L-aspartate. Position 124 (Asn124) interacts with L-citrulline. L-citrulline contacts are provided by Arg128, Ser179, Ser188, Glu264, and Tyr276.

The protein belongs to the argininosuccinate synthase family. Type 1 subfamily. Homotetramer.

The protein resides in the cytoplasm. It catalyses the reaction L-citrulline + L-aspartate + ATP = 2-(N(omega)-L-arginino)succinate + AMP + diphosphate + H(+). The protein operates within amino-acid biosynthesis; L-arginine biosynthesis; L-arginine from L-ornithine and carbamoyl phosphate: step 2/3. This chain is Argininosuccinate synthase, found in Ectopseudomonas mendocina (strain ymp) (Pseudomonas mendocina).